Here is a 273-residue protein sequence, read N- to C-terminus: MQKTVLEPQRGFSFENCERNAALQRALPGLRVPHARKTGTTIAGLVFQDGVILGADTRATNDSVVADKICEKIHFIAPKIYCCGAGVAADAEMTTRMAASNMELHALSTGRECRVATVTRMLRQTLFRYQGYVGASLIVGGVDFTGPQLYSVHPHGSYSRLPFTALGSGQDAAIAVLEDRFQPNMTLEAAQELLVEAITAGILGDLGSGGNVDACVITAAGAKMLRALSSPTKPIERSSQYRFAPGTTPVLSQTVVPLTLELVEETVQAMDVE.

Position 1 is an N-acetylmethionine (Met1). A propeptide spans 1 to 39 (MQKTVLEPQRGFSFENCERNAALQRALPGLRVPHARKTG) (removed in mature form). Residue Thr40 is the Nucleophile of the active site. Ser230 is subject to Phosphoserine.

This sequence belongs to the peptidase T1B family. In terms of assembly, the 26S proteasome consists of a 20S proteasome core and two 19S regulatory subunits. The 20S proteasome core is composed of 28 subunits that are arranged in four stacked rings, resulting in a barrel-shaped structure. The two end rings are each formed by seven alpha subunits, and the two central rings are each formed by seven beta subunits. The catalytic chamber with the active sites is on the inside of the barrel. Component of the immunoproteasome, where it displaces the equivalent housekeeping subunit PSMB7. Component of the spermatoproteasome, a form of the proteasome specifically found in testis. In terms of processing, autocleaved. The resulting N-terminal Thr residue of the mature subunit is responsible for the nucleophile proteolytic activity.

It is found in the cytoplasm. The protein resides in the nucleus. It carries out the reaction Cleavage of peptide bonds with very broad specificity.. In terms of biological role, the proteasome is a multicatalytic proteinase complex which is characterized by its ability to cleave peptides with Arg, Phe, Tyr, Leu, and Glu adjacent to the leaving group at neutral or slightly basic pH. The proteasome has an ATP-dependent proteolytic activity. This subunit is involved in antigen processing to generate class I binding peptides. The protein is Proteasome subunit beta type-10 (PSMB10) of Bos taurus (Bovine).